The chain runs to 386 residues: Glycerate dehydrogenase HPR, peroxisomal (386 aa).

NAD(+) contacts are provided by residues 175 to 176, 271 to 273, and aspartate 297; these read RI and CSR. Residue arginine 273 is part of the active site. Glutamate 302 is an active-site residue. The active-site Proton donor is histidine 320. 320–323 serves as a coordination point for NAD(+); it reads HIAS. The short motif at 384 to 386 is the Microbody targeting signal element; the sequence is SKL.

This sequence belongs to the D-isomer specific 2-hydroxyacid dehydrogenase family. As to expression, present in leaves (at protein level). Mostly expressed in photosynthetic tissues such as leaves, stems, flowers, buds, and, to a lower extent, in siliques and roots.

It is found in the peroxisome. The enzyme catalyses (R)-glycerate + NAD(+) = 3-hydroxypyruvate + NADH + H(+). Its pathway is photosynthesis; photorespiration; 3-phospho-D-glycerate from glycine: step 3/4. Its activity is regulated as follows. Slightly inhibited by oxalate. Functionally, catalyzes the NADH-dependent reduction of hydroxypyruvate into glycerate in the photorespiratory core cycle. Mediates fatty acid beta-oxidation in germinating seeds when malate dehydrogenase is absent. The sequence is that of Glycerate dehydrogenase HPR, peroxisomal (HPR) from Arabidopsis thaliana (Mouse-ear cress).